Consider the following 132-residue polypeptide: Small ribosomal subunit protein uS8 (132 aa).

The protein belongs to the universal ribosomal protein uS8 family. In terms of assembly, part of the 30S ribosomal subunit. Contacts proteins S5 and S12.

In terms of biological role, one of the primary rRNA binding proteins, it binds directly to 16S rRNA central domain where it helps coordinate assembly of the platform of the 30S subunit. This chain is Small ribosomal subunit protein uS8, found in Streptomyces coelicolor (strain ATCC BAA-471 / A3(2) / M145).